The chain runs to 273 residues: MTVAAASTRPQRARGRGHLAARALDGRTRLAELFQEGSAKIRLPATFDNSMEAVIINTAGGLTGGDRMDWSIVAGPGTRIDVTTQACEKIYKASASTAEVVTSIRAGAGARVDWLPQETILFDRASLSRRLDVDLDETAEFLAVEAILLGRKAMGEAMRQGLFRDRWRIRRAGRLIHAEELRLDGDVAALTAEHAVLSGQVAFTTLLYAGPLAETYLAQVRPLVEGHMGGASQWRDKLVVRLAASDGFALRKILIPVISALRNGAPVPKVWNL.

This sequence belongs to the UreD family. UreD, UreF and UreG form a complex that acts as a GTP-hydrolysis-dependent molecular chaperone, activating the urease apoprotein by helping to assemble the nickel containing metallocenter of UreC. The UreE protein probably delivers the nickel.

It is found in the cytoplasm. Functionally, required for maturation of urease via the functional incorporation of the urease nickel metallocenter. This Rhizobium rhizogenes (strain K84 / ATCC BAA-868) (Agrobacterium radiobacter) protein is Urease accessory protein UreD.